Consider the following 469-residue polypeptide: UDP-N-acetylmuramate--L-alanine ligase (469 aa).

Residue 112–118 participates in ATP binding; it reads GTHGKTT.

The protein belongs to the MurCDEF family.

Its subcellular location is the cytoplasm. The catalysed reaction is UDP-N-acetyl-alpha-D-muramate + L-alanine + ATP = UDP-N-acetyl-alpha-D-muramoyl-L-alanine + ADP + phosphate + H(+). It participates in cell wall biogenesis; peptidoglycan biosynthesis. Functionally, cell wall formation. This Laribacter hongkongensis (strain HLHK9) protein is UDP-N-acetylmuramate--L-alanine ligase.